The following is a 243-amino-acid chain: Type III pantothenate kinase (243 aa).

ATP is bound at residue 7–14 (DLGNSRFK). Substrate contacts are provided by residues Tyr91 and 98–101 (GVDR). The active-site Proton acceptor is Asp100. Thr122 provides a ligand contact to ATP. A substrate-binding site is contributed by Thr172.

This sequence belongs to the type III pantothenate kinase family. Homodimer. Requires NH4(+) as cofactor. K(+) serves as cofactor.

It is found in the cytoplasm. The enzyme catalyses (R)-pantothenate + ATP = (R)-4'-phosphopantothenate + ADP + H(+). It participates in cofactor biosynthesis; coenzyme A biosynthesis; CoA from (R)-pantothenate: step 1/5. Its function is as follows. Catalyzes the phosphorylation of pantothenate (Pan), the first step in CoA biosynthesis. This is Type III pantothenate kinase from Stenotrophomonas maltophilia (strain R551-3).